The chain runs to 367 residues: uncharacterized protein (367 aa).

4 helical membrane passes run tyrosine 35–tryptophan 55, leucine 61–valine 81, glutamate 92–glycine 112, and leucine 113–leucine 133. 3 disordered regions span residues lysine 177–isoleucine 220, serine 249–proline 283, and glycine 296–lysine 367. A compositionally biased stretch (polar residues) spans asparagine 257–serine 274. Low complexity predominate over residues serine 302–threonine 312. Over residues serine 323–glutamine 342 the composition is skewed to basic and acidic residues. Residues proline 357 to lysine 367 show a composition bias toward basic residues.

The protein belongs to the chlamydial CPn_0443/CT_005/TC_0273 family.

The protein localises to the cell membrane. This is an uncharacterized protein from Chlamydia muridarum (strain MoPn / Nigg).